Consider the following 280-residue polypeptide: 4-diphosphocytidyl-2-C-methyl-D-erythritol kinase (280 aa).

Lysine 11 is an active-site residue. 95 to 105 (PVGAGLGGGSS) lines the ATP pocket. Residue aspartate 137 is part of the active site.

This sequence belongs to the GHMP kinase family. IspE subfamily.

It carries out the reaction 4-CDP-2-C-methyl-D-erythritol + ATP = 4-CDP-2-C-methyl-D-erythritol 2-phosphate + ADP + H(+). The protein operates within isoprenoid biosynthesis; isopentenyl diphosphate biosynthesis via DXP pathway; isopentenyl diphosphate from 1-deoxy-D-xylulose 5-phosphate: step 3/6. In terms of biological role, catalyzes the phosphorylation of the position 2 hydroxy group of 4-diphosphocytidyl-2C-methyl-D-erythritol. This is 4-diphosphocytidyl-2-C-methyl-D-erythritol kinase from Geobacter sp. (strain M21).